The following is a 114-amino-acid chain: Histone H2A.Z-specific chaperone chz-1 (114 aa).

Positions 1 to 22 (MSTENGTTDTTLAGTAEANTPF) are enriched in polar residues. The disordered stretch occupies residues 1-114 (MSTENGTTDT…FVPEDEEMEE (114 aa)). Residues 24-40 (SKGKGKAAAESEDHPMG) show a composition bias toward basic and acidic residues. Acidic residues-rich tracts occupy residues 41–68 (EAED…EEID) and 93–114 (PAEE…EMEE).

This sequence belongs to the CHZ1 family. In terms of assembly, forms a heterotrimer with H2A.Z-H2B, stabilizing the association of the histone dimer. Also, with a lower affinity, forms a heterotrimer with H2A-H2B.

Its subcellular location is the nucleus. Functionally, forms a chaperone-bound H2A.Z-H2B complex that acts as a source for SWR1 complex-dependent H2A to H2A.Z histone replacement in chromatin. The protein is Histone H2A.Z-specific chaperone chz-1 (chz-1) of Neurospora crassa (strain ATCC 24698 / 74-OR23-1A / CBS 708.71 / DSM 1257 / FGSC 987).